We begin with the raw amino-acid sequence, 304 residues long: Iron(III) enterobactin esterase (304 aa).

Residues 1-25 (MRTSLLVAALGLALAAALPGGAPLA) form the signal peptide. Residues Ser-182, Glu-242, and His-283 each act as charge relay system in the active site.

This sequence belongs to the esterase D family. As to quaternary structure, monomer.

It is found in the periplasm. The enzyme catalyses Fe(III)-enterobactin + 3 H2O + H(+) = Fe(III)-[N-(2,3-dihydroxybenzoyl)-L-serine] + 2 N-(2,3-dihydroxybenzoyl)-L-serine. The catalysed reaction is Fe(III)-enterobactin + H2O = Fe(III)-[N-(2,3-dihydroxybenzoyl)-L-serine]3 + H(+). It catalyses the reaction Fe(III)-[N-(2,3-dihydroxybenzoyl)-L-serine]3 + H2O + H(+) = Fe(III)-[N-(2,3-dihydroxybenzoyl)-L-serine]2 + N-(2,3-dihydroxybenzoyl)-L-serine. It carries out the reaction Fe(III)-[N-(2,3-dihydroxybenzoyl)-L-serine]2 + H2O + H(+) = Fe(III)-[N-(2,3-dihydroxybenzoyl)-L-serine] + N-(2,3-dihydroxybenzoyl)-L-serine. In terms of biological role, catalyzes the hydrolysis of ferric enterobactin (Fe-Ent). Hydrolyzes Fe-Ent into three molecules of 2,3-dihydroxybenzoylserine (DHBS) still complexed with ferric iron. Iron reduction is necessary to obtain complete release of the metal from DHBS. It can hydrolyze salmochelin S4 (diglucosyl-C-Ent) but is not involved in iron acquisition by this siderophore. The protein is Iron(III) enterobactin esterase of Pseudomonas aeruginosa (strain ATCC 15692 / DSM 22644 / CIP 104116 / JCM 14847 / LMG 12228 / 1C / PRS 101 / PAO1).